The chain runs to 86 residues: Weak toxin 3 (86 aa).

The first 23 residues, 1–23 (MKTLLLTLVVVTIVCLDLGYTLT), serve as a signal peptide directing secretion. Disulfide bonds link cysteine 24–cysteine 45, cysteine 27–cysteine 32, cysteine 38–cysteine 63, cysteine 67–cysteine 78, and cysteine 79–cysteine 84.

Belongs to the three-finger toxin family. Ancestral subfamily. Orphan group II sub-subfamily. As to expression, expressed by the venom gland.

It localises to the secreted. Its function is as follows. Binds with low affinity to muscular (alpha-1-beta-1-delta-epsilon/CHRNA1-CHRNB1-CHRND-CHRNE) and very low affinity to neuronal (alpha-7/CHRNA7) nicotinic acetylcholine receptor (nAChR). The protein is Weak toxin 3 of Bungarus candidus (Malayan krait).